Reading from the N-terminus, the 78-residue chain is MSRVCQVSGKRVQTGNNVSHANNKTRRRFLPNLHERRFWVASENRWVKLRVSAHALRTIDKNGIDSVLAELRARGEKV.

The tract at residues Met1 to Asn23 is disordered. Over residues Arg11–Asn22 the composition is skewed to polar residues.

This sequence belongs to the bacterial ribosomal protein bL28 family.

The sequence is that of Large ribosomal subunit protein bL28 from Stenotrophomonas maltophilia (strain R551-3).